The sequence spans 856 residues: Glucose transport transcription regulator RGT1 (856 aa).

Residues 1–13 (MNGATATATAAVG) are compositionally biased toward low complexity. The interval 1 to 42 (MNGATATATAAVGAEEEGGAREGSRRRDSVESAGDGRRRTKV) is disordered. Over residues 18–37 (GGAREGSRRRDSVESAGDGR) the composition is skewed to basic and acidic residues. Residues 46–75 (CDQCRRKKIKCEYQEDAQSCSGCRKNSERC) constitute a DNA-binding region (zn(2)-C6 fungal-type). 3 disordered regions span residues 83–121 (KRGPSKGYTRGEGAGDGARETEGARGELDTSRADGKAAP), 168–244 (QRRS…QQLP), and 261–330 (TSAS…PADP). Residues 99 to 117 (GARETEGARGELDTSRADG) are compositionally biased toward basic and acidic residues. Residues 168–183 (QRRSSLESVNSDASGP) are compositionally biased toward polar residues. Low complexity-rich tracts occupy residues 184 to 207 (QSQQETYAASSASTSSHQRTSRSY), 261 to 270 (TSASSQSVQL), and 277 to 294 (STSLPEDSSPSSSNAYSP). Residues 303–312 (ESLTTPTAGS) show a composition bias toward polar residues.

It belongs to the EDS1/RGT1 family.

The protein localises to the nucleus. Its subcellular location is the cytoplasm. In terms of biological role, glucose-responsive transcription factor that regulates expression of several glucose transporter (HXT) genes in response to glucose. In the absence of glucose, it functions as a transcriptional repressor, whereas high concentrations of glucose cause it to function as a transcriptional activator. In cells growing on low levels of glucose, has a neutral role, neither repressing nor activating transcription. This is Glucose transport transcription regulator RGT1 (RGT1) from Eremothecium gossypii (strain ATCC 10895 / CBS 109.51 / FGSC 9923 / NRRL Y-1056) (Yeast).